The primary structure comprises 116 residues: Somatostatin (116 aa).

A signal peptide spans 1–24 (MLSCRLQCALAALSIVLALGGVTG). Positions 25-88 (APSDPRLRQF…QDEMRLELQR (64 aa)) are excised as a propeptide. Position 43 is an alanine amide (Ala-43). The interval 62–99 (QTENDALEPEDLSQAAEQDEMRLELQRSANSNPAMAPR) is disordered. A disulfide bridge connects residues Cys-105 and Cys-116.

It belongs to the somatostatin family. Post-translationally, C-terminal amidation of the neuronostatin peptide is required for its biological activity, including for the regulation of mean arterial pressure. Expressed in the pancreas and the spleen (at protein level).

The protein resides in the secreted. Its function is as follows. Inhibits the secretion of pituitary hormones, including that of growth hormone/somatotropin (GH1), PRL, ACTH, luteinizing hormone (LH) and TSH. Also impairs ghrelin- and GnRH-stimulated secretion of GH1 and LH; the inhibition of ghrelin-stimulated secretion of GH1 can be further increased by neuronostatin. Functionally, may enhance low-glucose-induced glucagon release by pancreatic alpha cells. This effect may be mediated by binding to GPR107 and PKA activation. May regulate cardiac contractile function. May compromise cardiomyocyte viability. In the central nervous system, may impair memory retention and may affect hippocampal excitability. May also have anxiolytic and anorexigenic effects. May play a role in arterial pressure regulation. May inhibit basal, but not ghrelin- or GnRH-stimulated secretion of GH1 or LH, but does not affect the release of other pituitary hormones, including PRL, ACTH, FSH or TSH. Potentiates inhibitory action of somatostatin on ghrelin-stimulated secretion of GH1, but not that on GnRH-stimulated secretion of LH. The sequence is that of Somatostatin (SST) from Sus scrofa (Pig).